Reading from the N-terminus, the 1383-residue chain is MYATDSRGHSPAFLQPQNGNSRHPSGYVPGKVVPLRPPPPPKSQASAKFTSIRREDRATFAFSPEEQQAQRESQKQKRHKNTFICFAITSFSFFIALAIILGISSKYAPDENCPDQNPRLRNWDPGQDSAKQVVIKEGDMLRLTSDATVHSIVIQDGGLLVFGDNKDGSRNITLRTHYILIQDGGALHIGAEKCRYKSKATITLYGKSDEGESMPTFGKKFIGVEAGGTLELHGARKASWTLLARTLNSSGLPFGSYTFEKDFSRGLNVRVIDQDTAKILESERFDTHEYRNESRRLQEFLRFQDPGRIVAIAVGDSAAKSLLQGTIQMIQERLGSELIQGLGYRQAWALVGVIDGGSTSCNESVRNYENHSSGGKALAQREFYTVDGQKFSVTAYSEWIEGVSLSGFRVEVVDGVKLNLLDDVSSWKPGDQIVVASTDYSMYQAEEFTLLPCSECSHFQVKVKETPQFLHMGEIIDGVDMRAEVGILTRNIVIQGEVEDSCYAENQCQFFDYDTFGGHIMIMKNFTSVHLSYVELKHMGQQQMGRYPVHFHLCGDVDYKGGYRHATFVDGLSIHHSFSRCITVHGTNGLLIKDTIGFDTLGHCFFLEDGIEQRNTLFHNLGLLTKPGTLLPTDRNNSMCTTMRDKVFGNYIPVPATDCMAVSTFWIAHPNNNLINNAAAGSQDAGIWYLFHKEPTGESSGLQLLAKPELTPLGIFYNNRVHSNFKAGLFIDKGVKTTNSSAADPREYLCLDNSARFRPHQDANPEKPRVAALIDRLIAFKNNDNGAWVRGGDIIVQNSAFADNGIGLTFASDGSFPSDEGSSQEVSESLFVGESRNYGFQGGQNKYVGTGGIDQKPRTLPRNRTFPIRGFQIYDGPIHLTRSTFKKYVPTPDRYSSAIGFLMKNSWQITPRNNISLVKFGPHVSLNVFFGKPGPWFEDCEMDGDKNSIFHDIDGSVTGYKDAYVGRMDNYLIRHPSCVNVSKWNAVICSGTYAQVYVQTWSTQNLSMTITRDEYPSNPMVLRGINQKAAFPQYQPVVMLEKGYTIHWNGPAPRTTFLYLVNFNKNDWIRVGLCYPSNTSFQVTFGYLQRQNGSLSKIEEYEPVHSLEELQRKQSERKFYFDSSTGLLFLYLKAKSHRHGHSYCSSQGCERVKIQAATDSKDISNCMAKAYPQYYRKPSVVKRMPAMLTGLCQGCGTRQVVFTSDPHKSYLPVQFQSPDKAETQRGDPSVISVNGTDFTFRSAGVLLLVVDPCSVPFRLTEKTVFPLADVSRIEEYLKTGIPPRSIVLLSTRGEIKQLNISHLLVPLGLAKPAHLYDKGSTIFLGFSGNFKPSWTKLFTSPAGQGLGVLEQFIPLQLDEYGCPRATTVRRRDLELLKQASKAH.

A disordered region spans residues 1–50; it reads MYATDSRGHSPAFLQPQNGNSRHPSGYVPGKVVPLRPPPPPKSQASAKFT. Residues 1–82 lie on the Cytoplasmic side of the membrane; it reads MYATDSRGHS…SQKQKRHKNT (82 aa). Serine 10 and serine 63 each carry phosphoserine. The helical; Signal-anchor for type II membrane protein transmembrane segment at 83-103 threads the bilayer; the sequence is FICFAITSFSFFIALAIILGI. At 104–1383 the chain is on the extracellular side; it reads SSKYAPDENC…ELLKQASKAH (1280 aa). In terms of domain architecture, G8 spans 121–245; sequence RNWDPGQDSA…RKASWTLLAR (125 aa). Asparagine 248 and asparagine 292 each carry an N-linked (GlcNAc...) asparagine glycan. In terms of domain architecture, GG-type lectin 1 spans 255 to 412; it reads GSYTFEKDFS…VSLSGFRVEV (158 aa). PbH1 repeat units follow at residues 669–691, 711–733, and 791–812; these read HPNN…WYLF, TPLG…FIDK, and GGDI…TFAS. Residues asparagine 914 and asparagine 1234 are each glycosylated (N-linked (GlcNAc...) asparagine). A GG-type lectin 2 domain is found at 1208–1366; the sequence is KSYLPVQFQS…LDEYGCPRAT (159 aa).

It belongs to the CEMIP family. As to expression, widely expressed.

It is found in the cell membrane. It carries out the reaction Random hydrolysis of (1-&gt;4)-linkages between N-acetyl-beta-D-glucosamine and D-glucuronate residues in hyaluronate.. Cell surface hyaluronidase that mediates the initial cleavage of extracellular high-molecular-weight hyaluronan into intermediate-size hyaluronan of approximately 10-5 kDa fragments. Very specific to hyaluronan; not able to cleave chondroitin sulfate or dermatan sulfate. Has an essential function in systemic hyaluronan catabolism and turnover and regulates cell adhesion and migration via hyaluronan degradation at focal adhesion sites. Acts as a regulator of angiogenesis and heart morphogenesis by mediating degradation of extracellular hyaluronan, thereby regulating VEGF signaling. The protein is Cell surface hyaluronidase CEMIP2 of Homo sapiens (Human).